The following is a 546-amino-acid chain: Glucose-6-phosphate isomerase (546 aa).

The Proton donor role is filled by Glu-357. Catalysis depends on residues His-389 and Lys-509.

The protein belongs to the GPI family.

Its subcellular location is the cytoplasm. The catalysed reaction is alpha-D-glucose 6-phosphate = beta-D-fructose 6-phosphate. It participates in carbohydrate biosynthesis; gluconeogenesis. The protein operates within carbohydrate degradation; glycolysis; D-glyceraldehyde 3-phosphate and glycerone phosphate from D-glucose: step 2/4. Catalyzes the reversible isomerization of glucose-6-phosphate to fructose-6-phosphate. This is Glucose-6-phosphate isomerase from Anaeromyxobacter sp. (strain K).